The primary structure comprises 413 residues: Elongation factor 1-alpha (413 aa).

In terms of domain architecture, tr-type G spans 5-211 (KEHMNLAFIG…DDLEAPEKPV (207 aa)). The interval 14 to 21 (GHVDHGKS) is G1. 14–21 (GHVDHGKS) lines the GTP pocket. Ser21 contributes to the Mg(2+) binding site. The G2 stretch occupies residues 60–64 (GVTID). The interval 81–84 (DCPG) is G3. GTP contacts are provided by residues 81–85 (DCPGH) and 136–139 (NKMD). The segment at 136-139 (NKMD) is G4. The interval 175–177 (SAF) is G5.

It belongs to the TRAFAC class translation factor GTPase superfamily. Classic translation factor GTPase family. EF-Tu/EF-1A subfamily.

It is found in the cytoplasm. It catalyses the reaction GTP + H2O = GDP + phosphate + H(+). In terms of biological role, GTP hydrolase that promotes the GTP-dependent binding of aminoacyl-tRNA to the A-site of ribosomes during protein biosynthesis. In Methanothermobacter thermautotrophicus (strain ATCC 29096 / DSM 1053 / JCM 10044 / NBRC 100330 / Delta H) (Methanobacterium thermoautotrophicum), this protein is Elongation factor 1-alpha.